The chain runs to 662 residues: MDDEQNVLATVWPEVIAELTTGSADGSIPAVTRAQQAWLKLVKPITVAQGFALLSVPSSLAQEAIERDLREPILRSLGRRLGPQVEGLGVRIAAPATPTAERAAANPRHARMTSRPERPRGERPVPGLPGQEAVDRPETLPRYSQAAESVPGYPARQDHSRPGDYPPAAEYTPAAEYTPAAEYTPAAEYSPEPEYTPATDYPGADDYPTTVFRLPPGGFAEPPGDGRPGGVPEISTPRRDGHGPRRDATPPGQEALFTPEPGDRPLRDTDRPLREPAAGHDVRESDGPVERDDEPVVNIRDSWPTYFAKNQESTPAPANSSASLNAKYTFETFVIGASNRFAHAAAVAIAEAPARAYNPLFVWGASGLGKTHLLHAAGHYAQRLFPGMRVKYVSTEEFTNDFINSLRDDRKVAFKRRYRETDILLVDDIQFIEGKEGIQEEFFHTFNTLHNANKQIVVSSDRPPKQLATLEERLRTRFEWGLITDVQPPELETRIAILRKKARMDRLDVPHDVLELIASRVERNIRELEGALIRVTAFASLNGQPLDLSLAEVVLRDLMPDTATLEINAATIMAVTAEYFNTTLEELTGPGKARPLAQARQIAMYLCRELTDLSLPKIGQAFGRDHTTVMYAEKKVRKEMTERRRVYDQVQELTARIKQRSR.

The tract at residues 1-93 is domain I, interacts with DnaA modulators; sequence MDDEQNVLAT…QVEGLGVRIA (93 aa). Residues 93 to 322 form a domain II region; sequence AAPATPTAER…STPAPANSSA (230 aa). Low complexity predominate over residues 96-105; the sequence is ATPTAERAAA. The segment at 96–294 is disordered; that stretch reads ATPTAERAAA…SDGPVERDDE (199 aa). The segment covering 114–123 has biased composition (basic and acidic residues); it reads SRPERPRGER. Positions 166–199 are enriched in low complexity; that stretch reads PPAAEYTPAAEYTPAAEYTPAAEYSPEPEYTPAT. 2 stretches are compositionally biased toward basic and acidic residues: residues 236–248 and 261–290; these read TPRRDGHGPRRDA and PGDRPLRDTDRPLREPAAGHDVRESDGPVE. The interval 323 to 539 is domain III, AAA+ region; the sequence is SLNAKYTFET…GALIRVTAFA (217 aa). Residues Gly-367, Gly-369, Lys-370, and Thr-371 each coordinate ATP. The interval 540–662 is domain IV, binds dsDNA; the sequence is SLNGQPLDLS…LTARIKQRSR (123 aa).

The protein belongs to the DnaA family. In terms of assembly, oligomerizes as a right-handed, spiral filament on DNA at oriC.

The protein localises to the cytoplasm. Plays an essential role in the initiation and regulation of chromosomal replication. ATP-DnaA binds to the origin of replication (oriC) to initiate formation of the DNA replication initiation complex once per cell cycle. Binds the DnaA box (a 9 base pair repeat at the origin) and separates the double-stranded (ds)DNA. Forms a right-handed helical filament on oriC DNA; dsDNA binds to the exterior of the filament while single-stranded (ss)DNA is stabiized in the filament's interior. The ATP-DnaA-oriC complex binds and stabilizes one strand of the AT-rich DNA unwinding element (DUE), permitting loading of DNA polymerase. After initiation quickly degrades to an ADP-DnaA complex that is not apt for DNA replication. Binds acidic phospholipids. This Nocardia farcinica (strain IFM 10152) protein is Chromosomal replication initiator protein DnaA.